A 253-amino-acid chain; its full sequence is Light-harvesting complex stress-related protein 1, chloroplastic (253 aa).

A chloroplast-targeting transit peptide spans 1–39 (MAMMMRKAAAVPASSRRSVAVNSVSGKRTVSGKAGAPVP). Tyr-45 is a binding site for chlorophyll b. Positions 60, 81, and 84 each coordinate chlorophyll a. Chlorophyll b is bound at residue Arg-86. A helical transmembrane segment spans residues 87–107 (VAMLAALGFIVGEQLQDFPLF). Residue Gln-124 coordinates chlorophyll a. A helical transmembrane segment spans residues 131–151 (EPLLIAIGVAESYRVAVGWAT). Chlorophyll b contacts are provided by Glu-141 and Arg-144. Chlorophyll a contacts are provided by Lys-190, Glu-191, Asn-194, Arg-196, and Gln-208. The helical transmembrane segment at 197 to 217 (LAMIAIAAFVAQELVEQTEIF) threads the bilayer.

The protein belongs to the light-harvesting chlorophyll a/b-binding (LHC) protein family.

The protein localises to the plastid. Its subcellular location is the chloroplast thylakoid membrane. Its function is as follows. Required for non-photochemical quenching (NPQ), a mechanism that converts and dissipates the harmful excess absorbed light energy into heat and protect the photosynthetic apparatus from photo-oxidative damage. Is able to sense luminal acidification of the thylakoid membranes, which occurs along with elevated electron flow caused by excess light, and to induce a large, fast, and reversible pH-dependent quenching in LHCII-containing membranes. Mediates excitation energy transfer from light-harvesting complex II (LHCII) to photosystem I (PSI), rather than photosystem II (PSII), at low pH, which mimics the acidified lumen of the thylakoid membranes in high light-exposed chloroplasts. Activates PSI-dependent fluorescence quenching in addition to dissipating excitation energy in LHCII to avoid photooxidative stress under excess light. This chain is Light-harvesting complex stress-related protein 1, chloroplastic, found in Chlamydomonas reinhardtii (Chlamydomonas smithii).